A 144-amino-acid polypeptide reads, in one-letter code: uncharacterized protein (144 aa).

Residues 50–140 enclose the Rhodanese domain; sequence NQDKAIVVDT…YWKTDNLPLI (91 aa).

This is an uncharacterized protein from Buchnera aphidicola subsp. Acyrthosiphon pisum (strain APS) (Acyrthosiphon pisum symbiotic bacterium).